Consider the following 225-residue polypeptide: Probable methylthioribulose-1-phosphate dehydratase (225 aa).

Cys-86 lines the substrate pocket. Zn(2+) is bound by residues His-104 and His-106. The Proton donor/acceptor role is filled by Glu-127. A Zn(2+)-binding site is contributed by His-183.

This sequence belongs to the aldolase class II family. MtnB subfamily. It depends on Zn(2+) as a cofactor.

The protein resides in the cytoplasm. The catalysed reaction is 5-(methylsulfanyl)-D-ribulose 1-phosphate = 5-methylsulfanyl-2,3-dioxopentyl phosphate + H2O. Its pathway is amino-acid biosynthesis; L-methionine biosynthesis via salvage pathway; L-methionine from S-methyl-5-thio-alpha-D-ribose 1-phosphate: step 2/6. In terms of biological role, catalyzes the dehydration of methylthioribulose-1-phosphate (MTRu-1-P) into 2,3-diketo-5-methylthiopentyl-1-phosphate (DK-MTP-1-P). The protein is Probable methylthioribulose-1-phosphate dehydratase of Leishmania infantum.